The primary structure comprises 577 residues: Efflux pump notK' (577 aa).

N-linked (GlcNAc...) asparagine glycosylation is found at Asn62 and Asn84. The next 5 membrane-spanning stretches (helical) occupy residues 104–124, 151–171, 189–209, 241–261, and 265–285; these read AAIA…PVAL, LAVT…MLGI, AGIG…LGLV, NPTM…LMMY, and GAVI…TTPV. Residue Asn320 is glycosylated (N-linked (GlcNAc...) asparagine). The next 5 helical transmembrane spans lie at 328 to 348, 373 to 393, 413 to 433, 434 to 454, and 476 to 496; these read FGLA…GTLY, VDAI…TAFV, GICF…PPWA, TGST…EINW, and IADG…GVWV. Over residues 555 to 566 the composition is skewed to low complexity; that stretch reads MPPNGSMSSGSP. Positions 555-577 are disordered; that stretch reads MPPNGSMSSGSPEQVAEKAVGKY. The N-linked (GlcNAc...) asparagine glycan is linked to Asn558.

This sequence belongs to the nucleobase:cation symporter-2 (NCS2) (TC 2.A.40) family. Azg-like subfamily.

Its subcellular location is the cell membrane. Functionally, efflux pump; part of the gene cluster that mediates the biosynthesis of notoamide, a fungal indole alkaloid that belongs to a family of natural products containing a characteristic bicyclo[2.2.2]diazaoctane core. The polypeptide is Efflux pump notK' (Aspergillus versicolor).